Here is a 353-residue protein sequence, read N- to C-terminus: Rhodopsin (353 aa).

The Extracellular segment spans residues 1–36 (MNGTEGPYFYVPMVNTSGIVRSPYEYPQYYLVNPAA). 2 N-linked (GlcNAc...) asparagine glycosylation sites follow: Asn2 and Asn15. A helical membrane pass occupies residues 37-61 (YAALGAYMFLLILVGFPINFLTLYV). Residues 62-73 (TIEHKKLRTPLN) lie on the Cytoplasmic side of the membrane. A helical transmembrane segment spans residues 74–96 (YILLNLAVADLFMVFGGFTTTMY). Residues 97 to 110 (TSMHGYFVLGRLGC) are Extracellular-facing. Cysteines 110 and 187 form a disulfide. The chain crosses the membrane as a helical span at residues 111–133 (NIEGFFATLGGEIALWSLVVLAI). The 'Ionic lock' involved in activated form stabilization motif lies at 134 to 136 (ERW). Over 134-152 (ERWVVVCKPISNFRFGENH) the chain is Cytoplasmic. A helical membrane pass occupies residues 153–173 (AIMGLAFTWLMAMACAAPPLV). At 174 to 202 (GWSRYIPEGMQCSCGIDYYTRAEGFNNES) the chain is on the extracellular side. Asn200 is a glycosylation site (N-linked (GlcNAc...) asparagine). Residues 203–224 (FVIYMFVCHFLIPLMVVFFCYG) form a helical membrane-spanning segment. Residues 225–252 (RLLCAVKEAAAAQQESETTQRAEREVTR) lie on the Cytoplasmic side of the membrane. The helical transmembrane segment at 253-274 (MVVIMVIAFLICWCPYAGVAWW) threads the bilayer. The Extracellular segment spans residues 275–286 (IFTHQGSDFGPV). A helical transmembrane segment spans residues 287 to 308 (FMTIPAFFAKSSSIYNPMIYIC). The residue at position 296 (Lys296) is an N6-(retinylidene)lysine. Over 309 to 353 (LNKQFRHCMITTLCCGKNPFEEEEGASTASKTEASSVSSSSVSPA) the chain is Cytoplasmic. S-palmitoyl cysteine attachment occurs at residues Cys322 and Cys323. The tract at residues 331-353 (EEGASTASKTEASSVSSSSVSPA) is disordered. The segment covering 334–353 (ASTASKTEASSVSSSSVSPA) has biased composition (low complexity).

It belongs to the G-protein coupled receptor 1 family. Opsin subfamily. In terms of processing, phosphorylated on some or all of the serine and threonine residues present in the C-terminal region. Contains one covalently linked retinal chromophore.

The protein resides in the membrane. It localises to the cell projection. The protein localises to the cilium. It is found in the photoreceptor outer segment. In terms of biological role, photoreceptor required for image-forming vision at low light intensity. While most salt water fish species use retinal as chromophore, most freshwater fish use 3-dehydroretinal, or a mixture of retinal and 3-dehydroretinal. Light-induced isomerization of 11-cis to all-trans retinal triggers a conformational change that activates signaling via G-proteins. Subsequent receptor phosphorylation mediates displacement of the bound G-protein alpha subunit by arrestin and terminates signaling. The polypeptide is Rhodopsin (rho) (Lithognathus mormyrus (Striped seabream)).